The chain runs to 492 residues: Acetyl-coenzyme A carboxylase carboxyl transferase subunit beta, chloroplastic (492 aa).

Residues serine 198–serine 219 form a disordered region. Residues leucine 228–asparagine 492 enclose the CoA carboxyltransferase N-terminal domain. Zn(2+)-binding residues include cysteine 232, cysteine 235, cysteine 251, and cysteine 254. Residues cysteine 232–cysteine 254 form a C4-type zinc finger.

This sequence belongs to the AccD/PCCB family. In terms of assembly, acetyl-CoA carboxylase is a heterohexamer composed of biotin carboxyl carrier protein, biotin carboxylase and 2 subunits each of ACCase subunit alpha and ACCase plastid-coded subunit beta (accD). Zn(2+) is required as a cofactor.

It is found in the plastid. The protein localises to the chloroplast stroma. The enzyme catalyses N(6)-carboxybiotinyl-L-lysyl-[protein] + acetyl-CoA = N(6)-biotinyl-L-lysyl-[protein] + malonyl-CoA. The protein operates within lipid metabolism; malonyl-CoA biosynthesis; malonyl-CoA from acetyl-CoA: step 1/1. Its function is as follows. Component of the acetyl coenzyme A carboxylase (ACC) complex. Biotin carboxylase (BC) catalyzes the carboxylation of biotin on its carrier protein (BCCP) and then the CO(2) group is transferred by the transcarboxylase to acetyl-CoA to form malonyl-CoA. The polypeptide is Acetyl-coenzyme A carboxylase carboxyl transferase subunit beta, chloroplastic (Citrus sinensis (Sweet orange)).